A 1080-amino-acid chain; its full sequence is AP-4 complex subunit epsilon (1080 aa).

HEAT repeat units follow at residues 161 to 198, 201 to 238, 369 to 405, 406 to 443, and 445 to 479; these read DTIP…LVGD, LDDD…KHST, QLIE…KVSP, KLVL…QTNV, and PVCS…KYSP. Disordered stretches follow at residues 711-782, 801-920, 933-973, and 996-1027; these read TPLV…FPQQ, NNNS…NIDP, FSEN…INNN, and TNNS…NNNL. Composition is skewed to low complexity over residues 762 to 782, 801 to 847, 878 to 911, 936 to 952, and 962 to 972; these read QQQQ…FPQQ, NNNS…PNNQ, NKQT…IQKH, NNNR…NQNN, and KKSNNENNINN.

It belongs to the adaptor complexes large subunit family. As to quaternary structure, may be part of the adaptor protein complex 4 (AP-4), a heterotetramer composed of two large adaptins (epsilon-type subunitand beta-type subunit), a medium adaptin (mu-type subunit) and a small adaptin (sigma-type).

The protein resides in the golgi apparatus. Its subcellular location is the trans-Golgi network membrane. Probable component of an adaptor protein complex. Adaptor protein complexes are vesicle coat components involved both in vesicle formation and cargo selection. They control the vesicular transport of proteins in different trafficking pathways. This chain is AP-4 complex subunit epsilon, found in Dictyostelium discoideum (Social amoeba).